The following is a 680-amino-acid chain: PAN2-PAN3 deadenylation complex subunit PAN3 (680 aa).

Disordered regions lie at residues 1-26, 51-87, and 99-120; these read MATT…RADT, HDQT…SKKT, and FTPR…TDIP. A C3H1-type zinc finger spans residues 25–54; that stretch reads DTKDTLCRNILIYGHCRYEDAGCAFNHDQT. The span at 52–64 shows a compositional bias: basic and acidic residues; that stretch reads DQTKKSPKPDATT. A PABPC-interacting motif-2 (PAM-2) motif is present at residues 62–82; sequence ATTRKTLNVDSAPFTPAVSSQ. The segment covering 99-117 has biased composition (low complexity); the sequence is FTPRATAATPTGTPTAQET. The segment at 256-522 is pseudokinase domain; the sequence is QTMTGTAALQ…TVKNLVAGIN (267 aa). Residues arginine 311, 360–367, and 422–423 each bind ATP; these read EYYPLAET and TK. Residues 523–561 adopt a coiled-coil conformation; the sequence is EHVMTAFDAQQRQSDMLYSELYREVENGRVLRLLMKLAT. Positions 562–680 are knob domain; the sequence is INERTEYDKD…VHHPSHRDRF (119 aa). A compositionally biased stretch (gly residues) spans 655–669; it reads SGNGRGGPVASGSGH. Residues 655–680 form a disordered region; it reads SGNGRGGPVASGSGHGVHHPSHRDRF. Residues 670–680 show a composition bias toward basic residues; the sequence is GVHHPSHRDRF.

The protein belongs to the protein kinase superfamily. PAN3 family. As to quaternary structure, homodimer. Forms a heterotrimer with a catalytic subunit PAN2 to form the poly(A)-nuclease (PAN) deadenylation complex. Interacts (via PAM-2 motif) with poly(A)-binding protein PAB1 (via PABC domain), conferring substrate specificity of the enzyme complex.

It localises to the cytoplasm. Its function is as follows. Regulatory subunit of the poly(A)-nuclease (PAN) deadenylation complex, one of two cytoplasmic mRNA deadenylases involved in mRNA turnover. PAN specifically shortens poly(A) tails of RNA and the activity is stimulated by poly(A)-binding protein PAB1. PAN deadenylation is followed by rapid degradation of the shortened mRNA tails by the CCR4-NOT complex. Deadenylated mRNAs are then degraded by two alternative mechanisms, namely exosome-mediated 3'-5' exonucleolytic degradation, or deadenylation-dependent mRNA decaping and subsequent 5'-3' exonucleolytic degradation by XRN1. May also be involved in post-transcriptional maturation of mRNA poly(A) tails. PAN3 acts as a positive regulator for PAN activity, recruiting the catalytic subunit PAN2 to mRNA via its interaction with RNA and with PAB1. This chain is PAN2-PAN3 deadenylation complex subunit PAN3, found in Pyricularia oryzae (strain 70-15 / ATCC MYA-4617 / FGSC 8958) (Rice blast fungus).